The chain runs to 74 residues: Serine protease inhibitor Kazal-type 7 (74 aa).

An N-terminal signal peptide occupies residues 1 to 17; that stretch reads MKLLGGLLLLFTATCLC. The Kazal-like domain occupies 18-74; the sequence is NVDCDIYKKYPVVAIPCPIENIPVCGSDYITYGNKCKLCTEILRSNGKIQFLHEGHC. Disulfide bonds link Cys-21/Cys-56, Cys-34/Cys-53, and Cys-42/Cys-74.

The protein localises to the secreted. Probable serine protease inhibitor. The protein is Serine protease inhibitor Kazal-type 7 (Spink7) of Rattus norvegicus (Rat).